A 289-amino-acid chain; its full sequence is Diaminopimelate epimerase (289 aa).

Substrate-binding residues include N13, Q52, and N72. C81 serves as the catalytic Proton donor. Substrate is bound by residues G82–N83, N167, N201, and E219–R220. The Proton acceptor role is filled by C228. Residue G229–T230 coordinates substrate.

It belongs to the diaminopimelate epimerase family. In terms of assembly, homodimer.

The protein localises to the cytoplasm. It carries out the reaction (2S,6S)-2,6-diaminopimelate = meso-2,6-diaminopimelate. It participates in amino-acid biosynthesis; L-lysine biosynthesis via DAP pathway; DL-2,6-diaminopimelate from LL-2,6-diaminopimelate: step 1/1. In terms of biological role, catalyzes the stereoinversion of LL-2,6-diaminopimelate (L,L-DAP) to meso-diaminopimelate (meso-DAP), a precursor of L-lysine and an essential component of the bacterial peptidoglycan. This chain is Diaminopimelate epimerase, found in Caulobacter sp. (strain K31).